A 423-amino-acid chain; its full sequence is D-tagatose-1,6-bisphosphate aldolase subunit GatZ (423 aa).

Belongs to the GatZ/KbaZ family. GatZ subfamily. In terms of assembly, forms a complex with GatY.

It participates in carbohydrate metabolism; D-tagatose 6-phosphate degradation; D-glyceraldehyde 3-phosphate and glycerone phosphate from D-tagatose 6-phosphate: step 2/2. Its function is as follows. Component of the tagatose-1,6-bisphosphate aldolase GatYZ that is required for full activity and stability of the Y subunit. Could have a chaperone-like function for the proper and stable folding of GatY. When expressed alone, GatZ does not show any aldolase activity. Is involved in the catabolism of galactitol. In Klebsiella pneumoniae subsp. pneumoniae (strain ATCC 700721 / MGH 78578), this protein is D-tagatose-1,6-bisphosphate aldolase subunit GatZ.